A 347-amino-acid polypeptide reads, in one-letter code: Uroporphyrinogen decarboxylase (347 aa).

Residues Arg-36–Arg-40, Asp-86, Tyr-160, Ser-212, and His-326 each bind substrate.

The protein belongs to the uroporphyrinogen decarboxylase family. In terms of assembly, homodimer.

The protein resides in the cytoplasm. It catalyses the reaction uroporphyrinogen III + 4 H(+) = coproporphyrinogen III + 4 CO2. Its pathway is porphyrin-containing compound metabolism; protoporphyrin-IX biosynthesis; coproporphyrinogen-III from 5-aminolevulinate: step 4/4. Functionally, catalyzes the decarboxylation of four acetate groups of uroporphyrinogen-III to yield coproporphyrinogen-III. In Wolbachia sp. subsp. Brugia malayi (strain TRS), this protein is Uroporphyrinogen decarboxylase.